Here is a 304-residue protein sequence, read N- to C-terminus: Secreted mono- and diacylglycerol lipase MDL4 (304 aa).

The first 19 residues, 1-19 (MRFGGVVSLVLGFIVSVLA), serve as a signal peptide directing secretion. Residues Cys55 and Cys297 are joined by a disulfide bond. Asn102 and Asn161 each carry an N-linked (GlcNAc...) asparagine glycan. Ser171 acts as the Nucleophile in catalysis. Asp228 is an active-site residue. N-linked (GlcNAc...) asparagine glycosylation is present at Asn253. Residue His281 is part of the active site.

The protein belongs to the AB hydrolase superfamily. Lipase family. Class 3 subfamily.

It localises to the secreted. The protein resides in the cell wall. It catalyses the reaction a monoacylglycerol + H2O = glycerol + a fatty acid + H(+). The enzyme catalyses a diacylglycerol + H2O = a monoacylglycerol + a fatty acid + H(+). Secreted lipase involved in Dandruff and seborrheic dermatitis (D/SD) probably via lipase-mediated breakdown of sebaceous lipids and release of irritating free fatty acids. Shows activity against monoglyceride and diglyceride substrates, but not triglyceride substrates and does not exhibit regio-selective production of diacylglycerols. Cleaves oleic acid from 1,2 isomers of diolein on both the 1 and the 2 position of the glycerol backbone, resulting mainly in free fatty acids but no monoolein is detected. Shows activity on monoolein and liberates mostly free fatty acids, but can also perform the reverse reaction and produce diolein. The chain is Secreted mono- and diacylglycerol lipase MDL4 from Malassezia globosa (strain ATCC MYA-4612 / CBS 7966) (Dandruff-associated fungus).